A 376-amino-acid chain; its full sequence is Fructose-1,6-bisphosphate aldolase/phosphatase (376 aa).

Aspartate 11 functions as the Proton acceptor; for FBP phosphatase activity in the catalytic mechanism. Mg(2+)-binding residues include aspartate 11, histidine 18, aspartate 49, and aspartate 50. Histidine 18 contacts beta-D-fructose 1,6-bisphosphate. Histidine 18 serves as a coordination point for dihydroxyacetone phosphate. Tyrosine 87 is a beta-D-fructose 1,6-bisphosphate binding site. A Mg(2+)-binding site is contributed by glutamine 91. 100–101 (GN) contacts beta-D-fructose 1,6-bisphosphate. Residue aspartate 128 coordinates Mg(2+). A beta-D-fructose 1,6-bisphosphate-binding site is contributed by lysine 129. Residue lysine 129 participates in dihydroxyacetone phosphate binding. Catalysis depends on tyrosine 224, which acts as the Proton donor/acceptor; for FBP aldolase activity. Residues lysine 227, aspartate 228, and aspartate 229 each coordinate Mg(2+). Lysine 227 serves as the catalytic Schiff-base intermediate with DHAP; for FBP aldolase activity. Beta-D-fructose 1,6-bisphosphate-binding positions include 237–238 (QK), arginine 261, and tyrosine 342. A dihydroxyacetone phosphate-binding site is contributed by arginine 261. Residues 357–376 (MVPLKDSGPAGTGRAYEDPD) form a disordered region.

The protein belongs to the FBP aldolase/phosphatase family. Homooctamer; dimer of tetramers. Mg(2+) serves as cofactor.

It catalyses the reaction beta-D-fructose 1,6-bisphosphate + H2O = beta-D-fructose 6-phosphate + phosphate. It carries out the reaction beta-D-fructose 1,6-bisphosphate = D-glyceraldehyde 3-phosphate + dihydroxyacetone phosphate. The protein operates within carbohydrate biosynthesis; gluconeogenesis. Catalyzes two subsequent steps in gluconeogenesis: the aldol condensation of dihydroxyacetone phosphate (DHAP) and glyceraldehyde-3-phosphate (GA3P) to fructose-1,6-bisphosphate (FBP), and the dephosphorylation of FBP to fructose-6-phosphate (F6P). The protein is Fructose-1,6-bisphosphate aldolase/phosphatase of Cenarchaeum symbiosum (strain A).